Here is a 2188-residue protein sequence, read N- to C-terminus: Tiggrin (2188 aa).

The N-terminal stretch at 1–18 (MRALGGITLLLAVAICQG) is a signal peptide. Coiled coils occupy residues 570-635 (SRLE…EHIK), 1009-1050 (LKNL…EIES), 1312-1343 (TFVE…EIEE), and 1613-1641 (KQQR…AQYH). Residues 1984–2188 (IFSKDRGDQP…FWEKLKEKLG (205 aa)) are disordered. The span at 1985–1998 (FSKDRGDQPPHTYD) shows a compositional bias: basic and acidic residues. Positions 1989-1991 (RGD) match the Cell attachment site motif. Positions 2000 to 2009 (SFVEGDEPGL) are enriched in acidic residues. A compositionally biased stretch (pro residues) spans 2016 to 2033 (PRPPNPAPIVSTPKPPLP). Composition is skewed to low complexity over residues 2057 to 2077 (GSAS…ASAS) and 2091 to 2101 (QQEVDLGQQQQ). The segment covering 2115–2139 (GQQTQVEDTDWNQQAEDLGQQQQVQ) has biased composition (polar residues). Residues 2148-2165 (QTQGHSSSSNSRSQPLQQ) are compositionally biased toward low complexity. Positions 2179-2188 (FWEKLKEKLG) are enriched in basic and acidic residues.

O-glycosylation by pgant3 is required for proper secretion and localization to the basal cell layer interface during wing development. As to expression, in embryos, expressed in the apodemes (muscle attachment sites) of the major longitudinal muscles 4, 6, 7, 12 and 13 and the wide dorsal oblique muscles 9 and 10, in hemocytes, in fat body cells, in basement membranes surrounding the gut and in the commissures of the ventral nerve cord. Expressed in larval imaginal wing disk and in pupal wing. In adult flies, expressed in the jump muscle (at protein level).

It is found in the secreted. Its subcellular location is the extracellular space. It localises to the extracellular matrix. Its function is as follows. Functions as a ligand for integrin alpha-PS2/beta-PS. Required in larvae for proper muscle structure and function. Involved in the regulation of cell adhesion during wing development. This is Tiggrin from Drosophila melanogaster (Fruit fly).